The following is a 438-amino-acid chain: 23S rRNA (uracil(1939)-C(5))-methyltransferase RlmD (438 aa).

A TRAM domain is found at 4 to 68; the sequence is FYTPGRRTAT…RHFARGRVTR (65 aa). Cys81, Cys87, Cys90, and Cys167 together coordinate [4Fe-4S] cluster. Residues Gln269, Phe298, Asn303, Glu319, Asn346, and Asp367 each contribute to the S-adenosyl-L-methionine site. Cys393 acts as the Nucleophile in catalysis.

It belongs to the class I-like SAM-binding methyltransferase superfamily. RNA M5U methyltransferase family. RlmD subfamily.

The catalysed reaction is uridine(1939) in 23S rRNA + S-adenosyl-L-methionine = 5-methyluridine(1939) in 23S rRNA + S-adenosyl-L-homocysteine + H(+). Catalyzes the formation of 5-methyl-uridine at position 1939 (m5U1939) in 23S rRNA. The protein is 23S rRNA (uracil(1939)-C(5))-methyltransferase RlmD of Edwardsiella ictaluri (strain 93-146).